The primary structure comprises 70 residues: Conotoxin Lt11.6 (70 aa).

The N-terminal stretch at 1 to 26 is a signal peptide; sequence MMFRLTSVGSFLLVIVFLNLVVLTNA. 4 disulfides stabilise this stretch: Cys-27–Cys-41, Cys-34–Cys-46, Cys-40–Cys-50, and Cys-45–Cys-54. The propeptide occupies 58 to 70; sequence AQRQKLLRSFGQR.

The protein belongs to the conotoxin I2 superfamily. Expressed by the venom duct.

It is found in the secreted. In Conus litteratus (Lettered cone), this protein is Conotoxin Lt11.6.